We begin with the raw amino-acid sequence, 385 residues long: Prophage integrase IntS (385 aa).

In terms of domain architecture, Core-binding (CB) spans 91–172 (NSFSAIYKEW…RCGEVFRYAI (82 aa)). In terms of domain architecture, Tyr recombinase spans 195-373 (KNFPFLPADQ…QYLDKRREMM (179 aa)). Active-site residues include Arg234, Lys261, His324, Arg327, and His350. The active-site O-(3'-phospho-DNA)-tyrosine intermediate is Tyr360.

This sequence belongs to the 'phage' integrase family.

In terms of biological role, integrase is necessary for integration of the phage into the host genome by site-specific recombination. In conjunction with excisionase, integrase is also necessary for excision of the prophage from the host genome. The polypeptide is Prophage integrase IntS (intS) (Escherichia coli (strain K12)).